A 328-amino-acid polypeptide reads, in one-letter code: DNA repair and recombination protein RadA (328 aa).

118-125 (GEYGSGKT) provides a ligand contact to ATP.

This sequence belongs to the eukaryotic RecA-like protein family.

Its function is as follows. Involved in DNA repair and in homologous recombination. Binds and assemble on single-stranded DNA to form a nucleoprotein filament. Hydrolyzes ATP in a ssDNA-dependent manner and promotes DNA strand exchange between homologous DNA molecules. The sequence is that of DNA repair and recombination protein RadA from Desulfurococcus amylolyticus (strain DSM 18924 / JCM 16383 / VKM B-2413 / 1221n) (Desulfurococcus kamchatkensis).